The chain runs to 318 residues: Olfactory receptor 51E1 (318 aa).

Residues Met1–Ala31 lie on the Extracellular side of the membrane. Asn8 is a glycosylation site (N-linked (GlcNAc...) asparagine). Residues Phe32–Val52 form a helical membrane-spanning segment. Over Arg53 to Glu60 the chain is Cytoplasmic. Residues Pro61–Met81 form a helical membrane-spanning segment. Topologically, residues Pro82–Cys100 are extracellular. Asn91 carries an N-linked (GlcNAc...) asparagine glycan. The cysteines at positions 100 and 182 are disulfide-linked. A helical membrane pass occupies residues Leu101 to Phe123. Residues Asp124–Thr145 lie on the Cytoplasmic side of the membrane. Residues Lys146 to Ile166 form a helical membrane-spanning segment. At Lys167 to Asn198 the chain is on the extracellular side. A helical membrane pass occupies residues Val199–Phe219. Topologically, residues Ser220–Ala239 are cytoplasmic. Residues Phe240–Leu260 form a helical membrane-spanning segment. The Extracellular portion of the chain corresponds to Ser261–Pro275. Residues Val276–Val296 traverse the membrane as a helical segment. Over Lys297–Pro318 the chain is Cytoplasmic.

It belongs to the G-protein coupled receptor 1 family. Highly expressed in prostate. Very low levels may be detected in some other tissues, such as placenta, skeletal muscle, heart, ovary and testis. Up-regulated in prostate cancers.

The protein resides in the cell membrane. Its function is as follows. Odorant receptor. The protein is Olfactory receptor 51E1 (OR51E1) of Homo sapiens (Human).